Consider the following 446-residue polypeptide: UDP-N-acetylmuramoylalanine--D-glutamate ligase (446 aa).

ATP is bound at residue 112–118 (GTNGKST).

The protein belongs to the MurCDEF family.

Its subcellular location is the cytoplasm. It catalyses the reaction UDP-N-acetyl-alpha-D-muramoyl-L-alanine + D-glutamate + ATP = UDP-N-acetyl-alpha-D-muramoyl-L-alanyl-D-glutamate + ADP + phosphate + H(+). It participates in cell wall biogenesis; peptidoglycan biosynthesis. Functionally, cell wall formation. Catalyzes the addition of glutamate to the nucleotide precursor UDP-N-acetylmuramoyl-L-alanine (UMA). This chain is UDP-N-acetylmuramoylalanine--D-glutamate ligase, found in Baumannia cicadellinicola subsp. Homalodisca coagulata.